The primary structure comprises 667 residues: Protein OS-9 (667 aa).

The first 25 residues, 1–25 (MAAETLLSSLLGLLLLGLLLPATLT), serve as a signal peptide directing secretion. One can recognise an MRH domain in the interval 108–230 (APCLLKTKDW…TIRTPRLCPH (123 aa)). Cys-110 and Cys-123 are oxidised to a cystine. Residues Trp-117, Trp-118, and Gln-130 each coordinate a mannooligosaccharide derivative. The N-linked (GlcNAc...) asparagine glycan is linked to Asn-177. 2 disulfide bridges follow: Cys-181–Cys-216 and Cys-196–Cys-228. Residues Asp-182, Arg-188, Glu-212, and Tyr-218 each contribute to the a mannooligosaccharide derivative site. Disordered stretches follow at residues 262-450 (QADS…SDRE), 506-541 (EKQS…EHRV), and 636-667 (ERQR…EFDF). Composition is skewed to basic and acidic residues over residues 263 to 279 (ADSK…RQDP), 304 to 328 (ENSK…KEET), and 396 to 408 (PSRE…KGDP). A compositionally biased stretch (acidic residues) spans 410 to 429 (QQNEVEEEEDDEDEDEDEDE). Residues 430 to 450 (RQLLGEFEKELEGILLPSDRE) show a composition bias toward basic and acidic residues. The segment covering 514 to 523 (KKHRKRRVVP) has biased composition (basic residues). The span at 636 to 647 (ERQRQKELESNY) shows a compositional bias: basic and acidic residues.

This sequence belongs to the OS-9 family. In terms of assembly, component of the HRD1 complex, which comprises at least SYNV1/HRD1, DERL1/2, FAM8A1, HERPUD1/HERP, OS9, SEL1L and UBE2J1. FAM8A1 is stabilized by interaction with SYNV1, which prevents its proteasomal degradation. OS9 and UBE2J1 recruitment to the complex may be mediated by SEL1L. Through this complex, may interact with ERLEC1 and HSPA5. Interacts (via C-terminus) with CPNE6 (via second C2 domain); this interaction occurs in a calcium-dependent manner in vitro. Interacts with CREB3. Post-translationally, intramolecular disulfide bonds.

It is found in the endoplasmic reticulum lumen. Lectin component of the HRD1 complex, which functions in endoplasmic reticulum (ER) quality control and ER-associated degradation (ERAD). Specifically recognizes and binds improperly folded glycoproteins as well as hyperglycosylated proteins, retain them in the ER, and transfers them to the ubiquitination machinery and promote their degradation. Possible targets include TRPV4 as well as hyperglycosylated HSP90B1. This chain is Protein OS-9 (OS9), found in Bos taurus (Bovine).